The primary structure comprises 426 residues: Serine--tRNA ligase (426 aa).

235 to 237 serves as a coordination point for L-serine; sequence TAE. 266-268 provides a ligand contact to ATP; sequence RRE. Glu-289 lines the L-serine pocket. 353 to 356 serves as a coordination point for ATP; sequence EISS. Ser-389 contacts L-serine.

This sequence belongs to the class-II aminoacyl-tRNA synthetase family. Type-1 seryl-tRNA synthetase subfamily. As to quaternary structure, homodimer. The tRNA molecule binds across the dimer.

The protein resides in the cytoplasm. It catalyses the reaction tRNA(Ser) + L-serine + ATP = L-seryl-tRNA(Ser) + AMP + diphosphate + H(+). The enzyme catalyses tRNA(Sec) + L-serine + ATP = L-seryl-tRNA(Sec) + AMP + diphosphate + H(+). It participates in aminoacyl-tRNA biosynthesis; selenocysteinyl-tRNA(Sec) biosynthesis; L-seryl-tRNA(Sec) from L-serine and tRNA(Sec): step 1/1. Functionally, catalyzes the attachment of serine to tRNA(Ser). Is also able to aminoacylate tRNA(Sec) with serine, to form the misacylated tRNA L-seryl-tRNA(Sec), which will be further converted into selenocysteinyl-tRNA(Sec). This is Serine--tRNA ligase from Nostoc sp. (strain PCC 7120 / SAG 25.82 / UTEX 2576).